Consider the following 480-residue polypeptide: Probable histone deacetylase 1-B (480 aa).

The segment at 10–321 (KVCYYYDGDV…WTYETAVALD (312 aa)) is histone deacetylase. Residue His-141 is part of the active site. The tract at residues 387-480 (DSVHDDSGEE…KRVKEETKSV (94 aa)) is disordered. Over residues 401–416 (PDKRISIRSSDKRIAC) the composition is skewed to basic and acidic residues. Positions 417–427 (DEEFSDSEDEG) are enriched in acidic residues. A compositionally biased stretch (basic and acidic residues) spans 443–480 (VKTEEEKEGEDKKDVKEEEKAKDEKTDSKRVKEETKSV).

It belongs to the histone deacetylase family. HD type 1 subfamily. As to quaternary structure, found in a large complex with RBBP4 and MI-2.

The protein localises to the nucleus. It localises to the cytoplasm. The catalysed reaction is N(6)-acetyl-L-lysyl-[histone] + H2O = L-lysyl-[histone] + acetate. The enzyme catalyses N(6)-acetyl-L-lysyl-[protein] + H2O = L-lysyl-[protein] + acetate. It carries out the reaction N(6)-(2E)-butenoyl-L-lysyl-[protein] + H2O = (2E)-2-butenoate + L-lysyl-[protein]. Histone deacetylase that catalyzes the deacetylation of lysine residues on the N-terminal part of the core histones (H2A, H2B, H3 and H4). Histone deacetylation gives a tag for epigenetic repression and plays an important role in transcriptional regulation, cell cycle progression and developmental events. Histone deacetylases act via the formation of large multiprotein complexes. Also functions as a deacetylase for non-histone proteins. In addition to protein deacetylase activity, also has protein-lysine deacylase activity: acts as a protein decrotonylase by mediating decrotonylation ((2E)-butenoyl) of histones. The chain is Probable histone deacetylase 1-B (hdac1-b) from Xenopus laevis (African clawed frog).